A 249-amino-acid polypeptide reads, in one-letter code: MDFLMSGLAACGACLFTNPLEVVKTRMQLQGELRAPGTYQRHYRNVFHAFITIGKVDGLAALQRGLAPALLYQFLMNGIRLGTYGLAEAGGYLHTAEGTLNPVRSAAAGALAGVMGAYLGSPIYMVKTHLQAQAATEIAVGHQYNHQIFPPQSWKVALAAAMVSGIAVVLAMTPFDVVSTRLYNQPTDAQGKGLMYRGLLDALLQTARTEGIFGMYKGIGASYFRLGPHTILSLFFWDQLRMVYYTYTK.

Solcar repeat units lie at residues 1 to 90 and 152 to 243; these read MDFL…AEAG and QSWK…LRMV. A run of 4 helical transmembrane segments spans residues 38-58, 59-79, 154-174, and 226-249; these read TYQRHYRNVFHAFITIGKVDG, LAALQRGLAPALLYQFLMNGI, WKVALAAAMVSGIAVVLAMTP, and LGPHTILSLFFWDQLRMVYYTYTK.

Belongs to the mitochondrial carrier (TC 2.A.29) family.

It is found in the mitochondrion inner membrane. The catalysed reaction is a dicarboxylate(in) + sulfate(out) = a dicarboxylate(out) + sulfate(in). In terms of biological role, putative antiporter that exchanges dicarboxylates and sulfur oxoanions across the inner membrane of mitochondria. This is Solute carrier family 25 member 35 (SLC25A35) from Bos taurus (Bovine).